Here is a 212-residue protein sequence, read N- to C-terminus: Thiamine-phosphate synthase (212 aa).

Residues 35-39 (QLRRK) and asparagine 67 each bind 4-amino-2-methyl-5-(diphosphooxymethyl)pyrimidine. Mg(2+) contacts are provided by aspartate 68 and aspartate 87. Residue serine 106 coordinates 4-amino-2-methyl-5-(diphosphooxymethyl)pyrimidine. Position 132–134 (132–134 (TGS)) interacts with 2-[(2R,5Z)-2-carboxy-4-methylthiazol-5(2H)-ylidene]ethyl phosphate. Position 135 (lysine 135) interacts with 4-amino-2-methyl-5-(diphosphooxymethyl)pyrimidine. Residues glycine 163 and 183-184 (IS) contribute to the 2-[(2R,5Z)-2-carboxy-4-methylthiazol-5(2H)-ylidene]ethyl phosphate site.

This sequence belongs to the thiamine-phosphate synthase family. Mg(2+) serves as cofactor.

It carries out the reaction 2-[(2R,5Z)-2-carboxy-4-methylthiazol-5(2H)-ylidene]ethyl phosphate + 4-amino-2-methyl-5-(diphosphooxymethyl)pyrimidine + 2 H(+) = thiamine phosphate + CO2 + diphosphate. The enzyme catalyses 2-(2-carboxy-4-methylthiazol-5-yl)ethyl phosphate + 4-amino-2-methyl-5-(diphosphooxymethyl)pyrimidine + 2 H(+) = thiamine phosphate + CO2 + diphosphate. The catalysed reaction is 4-methyl-5-(2-phosphooxyethyl)-thiazole + 4-amino-2-methyl-5-(diphosphooxymethyl)pyrimidine + H(+) = thiamine phosphate + diphosphate. It participates in cofactor biosynthesis; thiamine diphosphate biosynthesis; thiamine phosphate from 4-amino-2-methyl-5-diphosphomethylpyrimidine and 4-methyl-5-(2-phosphoethyl)-thiazole: step 1/1. Condenses 4-methyl-5-(beta-hydroxyethyl)thiazole monophosphate (THZ-P) and 2-methyl-4-amino-5-hydroxymethyl pyrimidine pyrophosphate (HMP-PP) to form thiamine monophosphate (TMP). This is Thiamine-phosphate synthase from Chlorobium luteolum (strain DSM 273 / BCRC 81028 / 2530) (Pelodictyon luteolum).